The sequence spans 65 residues: Small ribosomal subunit protein bS21 (65 aa).

The protein belongs to the bacterial ribosomal protein bS21 family.

This chain is Small ribosomal subunit protein bS21, found in Thermodesulfovibrio yellowstonii (strain ATCC 51303 / DSM 11347 / YP87).